The primary structure comprises 374 residues: Queuine tRNA-ribosyltransferase (374 aa).

The active-site Proton acceptor is the Asp-89. Substrate is bound by residues 89–93, Asp-143, Gln-187, and Gly-214; that span reads DSGGF. The tract at residues 245 to 251 is RNA binding; it reads GVGKPED. The active-site Nucleophile is Asp-264. An RNA binding; important for wobble base 34 recognition region spans residues 269 to 273; the sequence is TRNAR. 4 residues coordinate Zn(2+): Cys-302, Cys-304, Cys-307, and His-333.

The protein belongs to the queuine tRNA-ribosyltransferase family. Homodimer. Within each dimer, one monomer is responsible for RNA recognition and catalysis, while the other monomer binds to the replacement base PreQ1. It depends on Zn(2+) as a cofactor.

The catalysed reaction is 7-aminomethyl-7-carbaguanine + guanosine(34) in tRNA = 7-aminomethyl-7-carbaguanosine(34) in tRNA + guanine. It functions in the pathway tRNA modification; tRNA-queuosine biosynthesis. Functionally, catalyzes the base-exchange of a guanine (G) residue with the queuine precursor 7-aminomethyl-7-deazaguanine (PreQ1) at position 34 (anticodon wobble position) in tRNAs with GU(N) anticodons (tRNA-Asp, -Asn, -His and -Tyr). Catalysis occurs through a double-displacement mechanism. The nucleophile active site attacks the C1' of nucleotide 34 to detach the guanine base from the RNA, forming a covalent enzyme-RNA intermediate. The proton acceptor active site deprotonates the incoming PreQ1, allowing a nucleophilic attack on the C1' of the ribose to form the product. After dissociation, two additional enzymatic reactions on the tRNA convert PreQ1 to queuine (Q), resulting in the hypermodified nucleoside queuosine (7-(((4,5-cis-dihydroxy-2-cyclopenten-1-yl)amino)methyl)-7-deazaguanosine). In Psychromonas ingrahamii (strain DSM 17664 / CCUG 51855 / 37), this protein is Queuine tRNA-ribosyltransferase.